The following is a 392-amino-acid chain: uncharacterized protein (392 aa).

The protein belongs to the mimivirus L17x/L18x family.

This is an uncharacterized protein from Acanthamoeba polyphaga (Amoeba).